The following is a 505-amino-acid chain: N-succinylglutamate 5-semialdehyde dehydrogenase (505 aa).

234–239 (GSAHTG) provides a ligand contact to NAD(+). Active-site residues include glutamate 257 and cysteine 291.

It belongs to the aldehyde dehydrogenase family. AstD subfamily.

It catalyses the reaction N-succinyl-L-glutamate 5-semialdehyde + NAD(+) + H2O = N-succinyl-L-glutamate + NADH + 2 H(+). It functions in the pathway amino-acid degradation; L-arginine degradation via AST pathway; L-glutamate and succinate from L-arginine: step 4/5. In terms of biological role, catalyzes the NAD-dependent reduction of succinylglutamate semialdehyde into succinylglutamate. The chain is N-succinylglutamate 5-semialdehyde dehydrogenase from Yersinia pseudotuberculosis serotype IB (strain PB1/+).